We begin with the raw amino-acid sequence, 176 residues long: Peptide methionine sulfoxide reductase MsrA (176 aa).

C10 is a catalytic residue.

This sequence belongs to the MsrA Met sulfoxide reductase family.

It catalyses the reaction L-methionyl-[protein] + [thioredoxin]-disulfide + H2O = L-methionyl-(S)-S-oxide-[protein] + [thioredoxin]-dithiol. The catalysed reaction is [thioredoxin]-disulfide + L-methionine + H2O = L-methionine (S)-S-oxide + [thioredoxin]-dithiol. Functionally, has an important function as a repair enzyme for proteins that have been inactivated by oxidation. Catalyzes the reversible oxidation-reduction of methionine sulfoxide in proteins to methionine. In Sulfolobus acidocaldarius (strain ATCC 33909 / DSM 639 / JCM 8929 / NBRC 15157 / NCIMB 11770), this protein is Peptide methionine sulfoxide reductase MsrA.